The primary structure comprises 563 residues: (-)-germacrene D synthase (563 aa).

Residues 44-71 adopt a coiled-coil conformation; it reads TEITAAEKEELEKQKEKVKNLLDQTPND. 2 residues coordinate Mn(2+): aspartate 314 and aspartate 318. The DDXXD motif motif lies at 314–318; that stretch reads DDIYD. Homodimerization regions lie at residues 320–326 and 392–429; these read YGSLDEL and EAEWCFSKYFPTMEEYMKQALVSGAYMMLSTTSLVGME. Mn(2+) contacts are provided by aspartate 459 and glutamate 467.

Belongs to the terpene synthase family. In terms of assembly, homodimer. Requires Mn(2+) as cofactor. Mg(2+) serves as cofactor. In terms of tissue distribution, expressed in peltate glandular trichomes. Present at low levels in flowers, leaves and stems.

It carries out the reaction (2E,6E)-farnesyl diphosphate = (-)-germacrene D + diphosphate. The protein operates within secondary metabolite biosynthesis; terpenoid biosynthesis. Involved in the biosynthesis of phenolic sesquiterpenes natural products. Sesquiterpene synthase that catalyzes mainly the formation of (-)-germacrene D and minor amounts of other sesquiterpenes (e.g. bicyclo-germacrene) from farnesyl diphosphate (FPP). Also triggers moderate amounts formation of myrcene, limonene, terpinolene and linalool in the presence of geranyl diphosphate (GPP). The protein is (-)-germacrene D synthase of Origanum vulgare (Wild marjoram).